The primary structure comprises 154 residues: UPF0225 protein Asuc_0343 (154 aa).

This sequence belongs to the UPF0225 family.

This Actinobacillus succinogenes (strain ATCC 55618 / DSM 22257 / CCUG 43843 / 130Z) protein is UPF0225 protein Asuc_0343.